The primary structure comprises 483 residues: Serralysin (483 aa).

Zn(2+) is bound at residue His184. Glu185 is a catalytic residue. His188 and His194 together coordinate Zn(2+). Residues Arg263, Asp266, Asp295, Gly297, Gly298, Asp300, Thr337, and Glu339 each coordinate Ca(2+). Hemolysin-type calcium-binding repeat units follow at residues 342–359 (IGGS…ENIL) and 360–377 (KGGA…ADQL).

It belongs to the peptidase M10B family. Zn(2+) serves as cofactor. It depends on Ca(2+) as a cofactor.

Its subcellular location is the secreted. The enzyme catalyses Preferential cleavage of bonds with hydrophobic residues in P1'.. Its activity is regulated as follows. Inhibited by 8 mM 1,10-phenanthroline and 10 mM EDTA, but not by PMSF. Functionally, involved in the inhibition of insect antibacterial peptides. Reduces the antibacterial activity of G.mellonella hemolymph by 50%. Reduces the antibacterial activity of cecropin A by 80% and cecropin B by 75%. The protein is Serralysin of Photorhabdus sp. (strain Az29).